Here is a 417-residue protein sequence, read N- to C-terminus: Histidine--tRNA ligase (417 aa).

Belongs to the class-II aminoacyl-tRNA synthetase family. As to quaternary structure, homodimer.

The protein localises to the cytoplasm. It catalyses the reaction tRNA(His) + L-histidine + ATP = L-histidyl-tRNA(His) + AMP + diphosphate + H(+). The chain is Histidine--tRNA ligase from Oleidesulfovibrio alaskensis (strain ATCC BAA-1058 / DSM 17464 / G20) (Desulfovibrio alaskensis).